Reading from the N-terminus, the 292-residue chain is Succinate dehydrogenase assembly factor 2, mitochondrial (292 aa).

Disordered regions lie at residues 27 to 68 and 266 to 292; these read RSFG…NTTS and TGFHAAKSKKTGGAGLGRMPNVQVFDS. A compositionally biased stretch (polar residues) spans 55 to 68; that stretch reads TNRPPNQHVPNTTS.

The protein belongs to the SDHAF2 family. In terms of assembly, interacts with the flavoprotein subunit within the SDH catalytic dimer.

The protein resides in the mitochondrion matrix. Plays an essential role in the assembly of succinate dehydrogenase (SDH), an enzyme complex (also referred to as respiratory complex II) that is a component of both the tricarboxylic acid (TCA) cycle and the mitochondrial electron transport chain, and which couples the oxidation of succinate to fumarate with the reduction of ubiquinone (coenzyme Q) to ubiquinol. Required for flavinylation (covalent attachment of FAD) of the flavoprotein subunit of the SDH catalytic dimer. The protein is Succinate dehydrogenase assembly factor 2, mitochondrial of Aspergillus flavus (strain ATCC 200026 / FGSC A1120 / IAM 13836 / NRRL 3357 / JCM 12722 / SRRC 167).